A 465-amino-acid chain; its full sequence is Ribulose bisphosphate carboxylase large chain (465 aa).

N6,N6,N6-trimethyllysine is present on Lys4. Positions 113 and 163 each coordinate substrate. The active-site Proton acceptor is the Lys165. Residue Lys167 coordinates substrate. Mg(2+) is bound by residues Lys191, Asp193, and Glu194. N6-carboxylysine is present on Lys191. His284 serves as the catalytic Proton acceptor. Substrate-binding residues include Arg285, His317, and Ser369.

The protein belongs to the RuBisCO large chain family. Type I subfamily. In terms of assembly, heterohexadecamer of 8 large chains and 8 small chains; disulfide-linked. The disulfide link is formed within the large subunit homodimers. The cofactor is Mg(2+). In terms of processing, the disulfide bond which can form in the large chain dimeric partners within the hexadecamer appears to be associated with oxidative stress and protein turnover.

It is found in the plastid. The protein resides in the chloroplast. It catalyses the reaction 2 (2R)-3-phosphoglycerate + 2 H(+) = D-ribulose 1,5-bisphosphate + CO2 + H2O. The catalysed reaction is D-ribulose 1,5-bisphosphate + O2 = 2-phosphoglycolate + (2R)-3-phosphoglycerate + 2 H(+). Its function is as follows. RuBisCO catalyzes two reactions: the carboxylation of D-ribulose 1,5-bisphosphate, the primary event in carbon dioxide fixation, as well as the oxidative fragmentation of the pentose substrate in the photorespiration process. Both reactions occur simultaneously and in competition at the same active site. This chain is Ribulose bisphosphate carboxylase large chain, found in Passiflora quadrangularis (Grenadine).